The primary structure comprises 172 residues: Putative phosphoesterase BC_1225 (172 aa).

The active-site Proton donor is histidine 34. 2 short sequence motifs (HXTX) span residues 34–37 (HITL) and 115–118 (HLTI). Histidine 115 functions as the Proton acceptor in the catalytic mechanism.

Belongs to the 2H phosphoesterase superfamily. YjcG family.

The protein is Putative phosphoesterase BC_1225 of Bacillus cereus (strain ATCC 14579 / DSM 31 / CCUG 7414 / JCM 2152 / NBRC 15305 / NCIMB 9373 / NCTC 2599 / NRRL B-3711).